Consider the following 449-residue polypeptide: UPF0761 membrane protein Cpha266_1653 (449 aa).

A run of 6 helical transmembrane segments spans residues 77–97 (LLSL…FPVF), 133–153 (SVPL…ISTI), 173–193 (FTLY…SLVA), 214–234 (LLSF…YMLV), 244–264 (AVYG…WFVF), and 277–297 (GALS…VVVL).

It belongs to the UPF0761 family.

Its subcellular location is the cell inner membrane. This is UPF0761 membrane protein Cpha266_1653 from Chlorobium phaeobacteroides (strain DSM 266 / SMG 266 / 2430).